A 464-amino-acid chain; its full sequence is Citrate synthase 5, mitochondrial (464 aa).

Residues 1 to 25 constitute a mitochondrion transit peptide; sequence MVFFRSVSAISRLRSRAVQQSSLSN. Catalysis depends on residues His-300, His-346, and Asp-401.

It belongs to the citrate synthase family.

It localises to the mitochondrion matrix. It carries out the reaction oxaloacetate + acetyl-CoA + H2O = citrate + CoA + H(+). The protein operates within carbohydrate metabolism; tricarboxylic acid cycle; isocitrate from oxaloacetate: step 1/2. The sequence is that of Citrate synthase 5, mitochondrial (CSY5) from Arabidopsis thaliana (Mouse-ear cress).